Here is a 431-residue protein sequence, read N- to C-terminus: MKIVDINERLAISGQPNTDEFINFARRGYRSIINLRPDGEEPNQPGNDAEQAAARRAGLAYNFVPVIGTSITEADIQAFQRAIATTEGSVLVHCKSGTRALMLYALSEVIDGRMKRDEVEALGHAHGFDLGRAVTWLKRQAIQTPRVSGFFDPRTGSIQYVVTDQTTKRCAIIDPVLDFDEKSGATATTNADAILAHVEQQGLTVEWILDTHPHADHFSAAQYLKQRTGAPTAIGTHVTKVQRLWREIYNLPTLSTNGSQWDHLFADGDVFNVGSIKGRVMFSPGHTLASVTYVIGDTAFVHDTIFMPDSGTARADFPGGSARALWSSIQAILSLPDETRLFTGHDYQPSGRHPRWESTVGEQKKANLHLAGVDETTFVALREARDKTLPMPKLILHALQVNVLGGQLPEPEANGRRYLKFPLNALEGAAW.

Zn(2+)-binding residues include His-212, His-214, and His-286. Asp-309 is a binding site for substrate.

This sequence belongs to the metallo-beta-lactamase superfamily. Zn(2+) is required as a cofactor.

In terms of biological role, could play a role in cell adherence or biofilm development. This is Beta-lactamase hydrolase-like protein from Xylella fastidiosa (strain Temecula1 / ATCC 700964).